A 514-amino-acid polypeptide reads, in one-letter code: Serine--tRNA ligase, cytoplasmic (514 aa).

An N-acetylmethionine modification is found at Met1. The segment at 9–61 (RVDKGGDPALIRETQEKRFKDPGLVDQLVKADSEWRRCRFRADNLNKLKNLCS) is interaction with tRNA. The residue at position 241 (Ser241) is a Phosphoserine. The L-serine site is built by Thr271 and Arg302. ATP is bound by residues 302–304 (RQE) and 318–321 (VHQF). Lys323 is subject to N6-acetyllysine. Glu325 serves as a coordination point for L-serine. 391 to 394 (ELVS) contributes to the ATP binding site. Asn427 provides a ligand contact to L-serine. The interval 472-514 (KPAPIDQEPSKKQKKQHEGSKKKAAARDVTLENRLQNMEVTDA) is disordered. The span at 479 to 502 (EPSKKQKKQHEGSKKKAAARDVTL) shows a compositional bias: basic and acidic residues. Residues 482 to 494 (KKQKKQHEGSKKK) carry the Nuclear localization signal motif. The span at 504–514 (NRLQNMEVTDA) shows a compositional bias: polar residues.

It belongs to the class-II aminoacyl-tRNA synthetase family. Type-1 seryl-tRNA synthetase subfamily. In terms of assembly, homodimer. The tRNA molecule may bind across the dimer. Interacts with SIRT2. Interacts with METTL6; interaction is required for the tRNA N(3)-methylcytidine methyltransferase activity of METTL6.

The protein localises to the cytoplasm. Its subcellular location is the nucleus. It catalyses the reaction tRNA(Ser) + L-serine + ATP = L-seryl-tRNA(Ser) + AMP + diphosphate + H(+). It carries out the reaction tRNA(Sec) + L-serine + ATP = L-seryl-tRNA(Sec) + AMP + diphosphate + H(+). The protein operates within aminoacyl-tRNA biosynthesis; selenocysteinyl-tRNA(Sec) biosynthesis; L-seryl-tRNA(Sec) from L-serine and tRNA(Sec): step 1/1. Functionally, catalyzes the attachment of serine to tRNA(Ser) in a two-step reaction: serine is first activated by ATP to form Ser-AMP and then transferred to the acceptor end of tRNA(Ser). Is probably also able to aminoacylate tRNA(Sec) with serine, to form the misacylated tRNA L-seryl-tRNA(Sec), which will be further converted into selenocysteinyl-tRNA(Sec). In the nucleus, binds to the VEGFA core promoter and prevents MYC binding and transcriptional activation by MYC. Recruits SIRT2 to the VEGFA promoter, promoting deacetylation of histone H4 at 'Lys-16' (H4K16). Thereby, inhibits the production of VEGFA and sprouting angiogenesis mediated by VEGFA. The sequence is that of Serine--tRNA ligase, cytoplasmic (SARS1) from Oryctolagus cuniculus (Rabbit).